The following is a 291-amino-acid chain: 4-diphosphocytidyl-2-C-methyl-D-erythritol kinase (291 aa).

Lys-8 is an active-site residue. ATP is bound at residue 89–99 (PIGAGVGGGSS). The active site involves Asp-131.

This sequence belongs to the GHMP kinase family. IspE subfamily.

It carries out the reaction 4-CDP-2-C-methyl-D-erythritol + ATP = 4-CDP-2-C-methyl-D-erythritol 2-phosphate + ADP + H(+). It participates in isoprenoid biosynthesis; isopentenyl diphosphate biosynthesis via DXP pathway; isopentenyl diphosphate from 1-deoxy-D-xylulose 5-phosphate: step 3/6. In terms of biological role, catalyzes the phosphorylation of the position 2 hydroxy group of 4-diphosphocytidyl-2C-methyl-D-erythritol. The polypeptide is 4-diphosphocytidyl-2-C-methyl-D-erythritol kinase (Chlamydia caviae (strain ATCC VR-813 / DSM 19441 / 03DC25 / GPIC) (Chlamydophila caviae)).